The chain runs to 96 residues: Putative pterin-4-alpha-carbinolamine dehydratase (96 aa).

It belongs to the pterin-4-alpha-carbinolamine dehydratase family.

The catalysed reaction is (4aS,6R)-4a-hydroxy-L-erythro-5,6,7,8-tetrahydrobiopterin = (6R)-L-erythro-6,7-dihydrobiopterin + H2O. This chain is Putative pterin-4-alpha-carbinolamine dehydratase, found in Synechocystis sp. (strain ATCC 27184 / PCC 6803 / Kazusa).